Reading from the N-terminus, the 697-residue chain is Tryptophan synthase (697 aa).

Residues 1–298 (MTEQIKKTFL…AVVEPINEMY (298 aa)) are tryptophan synthase alpha chain. Active-site proton acceptor residues include E50 and D61. Positions 298 to 697 (YLPQKYGMFG…GPKIGWDLRF (400 aa)) are tryptophan synthase beta chain. K381 carries the N6-(pyridoxal phosphate)lysine modification.

This sequence in the N-terminal section; belongs to the TrpA family. It in the C-terminal section; belongs to the TrpB family. Requires pyridoxal 5'-phosphate as cofactor.

The enzyme catalyses (1S,2R)-1-C-(indol-3-yl)glycerol 3-phosphate + L-serine = D-glyceraldehyde 3-phosphate + L-tryptophan + H2O. It functions in the pathway amino-acid biosynthesis; L-tryptophan biosynthesis; L-tryptophan from chorismate: step 5/5. This is Tryptophan synthase (trp2) from Schizosaccharomyces pombe (strain 972 / ATCC 24843) (Fission yeast).